A 282-amino-acid polypeptide reads, in one-letter code: 2,3,4,5-tetrahydropyridine-2,6-dicarboxylate N-succinyltransferase (282 aa).

Substrate contacts are provided by arginine 109 and aspartate 146.

This sequence belongs to the transferase hexapeptide repeat family. Homotrimer.

The protein resides in the cytoplasm. It catalyses the reaction (S)-2,3,4,5-tetrahydrodipicolinate + succinyl-CoA + H2O = (S)-2-succinylamino-6-oxoheptanedioate + CoA. Its pathway is amino-acid biosynthesis; L-lysine biosynthesis via DAP pathway; LL-2,6-diaminopimelate from (S)-tetrahydrodipicolinate (succinylase route): step 1/3. The chain is 2,3,4,5-tetrahydropyridine-2,6-dicarboxylate N-succinyltransferase from Bartonella bacilliformis (strain ATCC 35685 / KC583 / Herrer 020/F12,63).